The primary structure comprises 208 residues: Uracil phosphoribosyltransferase (208 aa).

5-phospho-alpha-D-ribose 1-diphosphate-binding positions include Arg78, Arg103, and 130–138; that span reads DPMLATGGS. Residues Ile193 and 198–200 each bind uracil; that span reads GDA. Asp199 provides a ligand contact to 5-phospho-alpha-D-ribose 1-diphosphate.

This sequence belongs to the UPRTase family. The cofactor is Mg(2+).

The enzyme catalyses UMP + diphosphate = 5-phospho-alpha-D-ribose 1-diphosphate + uracil. It functions in the pathway pyrimidine metabolism; UMP biosynthesis via salvage pathway; UMP from uracil: step 1/1. Allosterically activated by GTP. Its function is as follows. Catalyzes the conversion of uracil and 5-phospho-alpha-D-ribose 1-diphosphate (PRPP) to UMP and diphosphate. This is Uracil phosphoribosyltransferase from Pelobacter propionicus (strain DSM 2379 / NBRC 103807 / OttBd1).